A 712-amino-acid chain; its full sequence is Transferrin-binding protein B (712 aa).

The first 20 residues, Met1–Ala20, serve as a signal peptide directing secretion. Cys21 carries the N-palmitoyl cysteine lipid modification. Residue Cys21 is the site of S-diacylglycerol cysteine attachment. Positions Gly59 to Leu196 are N-terminal handle domain. Disordered stretches follow at residues Glu78–Gln104, Pro123–Asn144, Ile223–Gly256, Asn309–Gly338, Ser364–Asn398, Ala442–Asn495, and Asn689–Arg712. The segment covering Asp95 to Gln104 has biased composition (basic and acidic residues). A compositionally biased stretch (polar residues) spans Ser128–Asn144. The interval Pro197–Thr367 is N-terminal beta barrel domain. Low complexity-rich tracts occupy residues Ala372–Asn398 and Gly446–Ala459. Residues Asn389–Asp555 form a C-terminal handle domain region. Basic and acidic residues predominate over residues Arg462–Ala475. 2 stretches are compositionally biased toward polar residues: residues Ala477 to Asn495 and Asn689 to Thr700. The C-terminal beta barrel domain stretch occupies residues Glu556–Arg712.

This sequence belongs to the TbpB family. Isotype II subfamily. In terms of assembly, binds only human holo-transferrin (TF), via the TF C-terminus. Forms a large complex with TF and TbpA. Interacts via its C-terminal domain with Slam1.

The protein localises to the cell outer membrane. The protein resides in the cell surface. Its function is as follows. Neisseria acquires iron by extracting it from serum transferrin (TF) in its human host. Acts as a TF receptor and is required for TF utilization. Involved in the initial capture of TF. Helps select only those TF molecules that can be used as an iron source and concentrates them on the cell surface, maintaining the iron-loaded status of the TF C-terminal lobe until its delivery to TbpA. The polypeptide is Transferrin-binding protein B (Neisseria meningitidis serogroup B (strain ATCC BAA-335 / MC58)).